Here is a 634-residue protein sequence, read N- to C-terminus: 1-deoxy-D-xylulose-5-phosphate synthase (634 aa).

Residues His74 and 115-117 (AHS) contribute to the thiamine diphosphate site. Position 146 (Asp146) interacts with Mg(2+). Residues 147–148 (GA), Asn176, Tyr283, and Glu365 each bind thiamine diphosphate. Asn176 contacts Mg(2+).

This sequence belongs to the transketolase family. DXPS subfamily. As to quaternary structure, homodimer. It depends on Mg(2+) as a cofactor. Thiamine diphosphate is required as a cofactor.

The enzyme catalyses D-glyceraldehyde 3-phosphate + pyruvate + H(+) = 1-deoxy-D-xylulose 5-phosphate + CO2. It functions in the pathway metabolic intermediate biosynthesis; 1-deoxy-D-xylulose 5-phosphate biosynthesis; 1-deoxy-D-xylulose 5-phosphate from D-glyceraldehyde 3-phosphate and pyruvate: step 1/1. Functionally, catalyzes the acyloin condensation reaction between C atoms 2 and 3 of pyruvate and glyceraldehyde 3-phosphate to yield 1-deoxy-D-xylulose-5-phosphate (DXP). This Burkholderia thailandensis (strain ATCC 700388 / DSM 13276 / CCUG 48851 / CIP 106301 / E264) protein is 1-deoxy-D-xylulose-5-phosphate synthase.